The chain runs to 498 residues: ATP synthase subunit beta, chloroplastic (498 aa).

172–179 (GGAGVGKT) is a binding site for ATP.

Belongs to the ATPase alpha/beta chains family. In terms of assembly, F-type ATPases have 2 components, CF(1) - the catalytic core - and CF(0) - the membrane proton channel. CF(1) has five subunits: alpha(3), beta(3), gamma(1), delta(1), epsilon(1). CF(0) has four main subunits: a(1), b(1), b'(1) and c(9-12).

The protein resides in the plastid. Its subcellular location is the chloroplast thylakoid membrane. It catalyses the reaction ATP + H2O + 4 H(+)(in) = ADP + phosphate + 5 H(+)(out). Functionally, produces ATP from ADP in the presence of a proton gradient across the membrane. The catalytic sites are hosted primarily by the beta subunits. This is ATP synthase subunit beta, chloroplastic from Nicotiana sylvestris (Wood tobacco).